The following is a 113-amino-acid chain: Hydrogenase maturation factor HypA (113 aa).

H2 provides a ligand contact to Ni(2+). C73, C76, C89, and C92 together coordinate Zn(2+).

Belongs to the HypA/HybF family.

Functionally, involved in the maturation of [NiFe] hydrogenases. Required for nickel insertion into the metal center of the hydrogenase. The polypeptide is Hydrogenase maturation factor HypA (Cereibacter sphaeroides (strain ATCC 17023 / DSM 158 / JCM 6121 / CCUG 31486 / LMG 2827 / NBRC 12203 / NCIMB 8253 / ATH 2.4.1.) (Rhodobacter sphaeroides)).